We begin with the raw amino-acid sequence, 217 residues long: Orotidine 5'-phosphate decarboxylase (217 aa).

Residues Asp14, Lys36, 64–73 (DFKVADIPST), Ser120, 172–182 (PGVGAQGGNLS), Gly197, and Arg198 each bind substrate. The active-site Proton donor is Lys66.

It belongs to the OMP decarboxylase family. Type 1 subfamily. Homodimer.

The enzyme catalyses orotidine 5'-phosphate + H(+) = UMP + CO2. Its pathway is pyrimidine metabolism; UMP biosynthesis via de novo pathway; UMP from orotate: step 2/2. In terms of biological role, catalyzes the decarboxylation of orotidine 5'-monophosphate (OMP) to uridine 5'-monophosphate (UMP). The chain is Orotidine 5'-phosphate decarboxylase from Methanococcus maripaludis (strain C6 / ATCC BAA-1332).